Here is a 345-residue protein sequence, read N- to C-terminus: D(2) dopamine receptor B (345 aa).

Over 1-10 (EWRFSRIHCD) the chain is Extracellular. An intrachain disulfide couples Cys9 to Cys84. The chain crosses the membrane as a helical span at residues 11 to 32 (IFVTLDVMMCTASILNLCAISI). Topologically, residues 33 to 53 (DRYTAVAMPMLYNTRYSSKRR) are cytoplasmic. The chain crosses the membrane as a helical span at residues 54-74 (VTVMISVVWVLSFAISCPLLF). Residues 75–90 (GLNNTASTVCIIDNPA) are Extracellular-facing. Residue Asn77 is glycosylated (N-linked (GlcNAc...) asparagine). Residues 91–115 (FVIYSSIVSFYVPFIVTLLVYVQIY) traverse the membrane as a helical segment. Residues 116 to 275 (IVLRKRRKRV…SQHKEKKATQ (160 aa)) are Cytoplasmic-facing. Positions 166–177 (KKKVEAGNHPED) are enriched in basic and acidic residues. The tract at residues 166–199 (KKKVEAGNHPEDMEMEMMSSTSPPEKTKHKSASP) is disordered. Residues 276-297 (MLAIVLGVFIICWLPFFITHIL) form a helical membrane-spanning segment. Residues 298 to 311 (NMHCNCNIPQALYS) lie on the Extracellular side of the membrane. Cysteines 301 and 303 form a disulfide. Residues 312–333 (AFTWLGYVNSAVNPIIYTTFNV) form a helical membrane-spanning segment. The Cytoplasmic portion of the chain corresponds to 334–345 (EFRKAFIKILHC). Cys345 carries S-palmitoyl cysteine lipidation.

Belongs to the G-protein coupled receptor 1 family. Post-translationally, palmitoylated. Palmitoylation is probably required for proper localization to the plasma membrane and stability of the receptor. In terms of tissue distribution, brain; pituitary.

It is found in the cell membrane. The protein localises to the golgi apparatus membrane. This is one of the five types (D1 to D5) of receptors for dopamine. The activity of this receptor is mediated by G proteins which inhibits adenylyl cyclase. In Xenopus D2R is involved in the regulation of the melanotrope cells of the intermediate pituitary during background adaptation of the animal. In Xenopus laevis (African clawed frog), this protein is D(2) dopamine receptor B (drd2-b).